Reading from the N-terminus, the 668-residue chain is Nuclear pore complex protein Nup75 (668 aa).

It belongs to the nucleoporin Nup85 family. Component of the nuclear pore complex (NPC). Component of the NPC Nup107-160 subcomplex.

Its subcellular location is the nucleus. It is found in the nuclear pore complex. It localises to the nucleus membrane. In terms of biological role, component of the nuclear pore complex (NPC) that seems to be required for NPC assembly and maintenance. Required for nuclear import of phosphorylated Mad via importin msk. Has no role in classical nuclear localization signal (cNLS)-dependent nuclear import via importin-beta. Facilitates the interaction between Nup93 and sec13 with msk. This Drosophila melanogaster (Fruit fly) protein is Nuclear pore complex protein Nup75.